Reading from the N-terminus, the 507-residue chain is Rhomboid protease GluP (507 aa).

5 helical membrane passes run 179–199 (FTYL…INGG), 229–249 (IVLH…WSVG), 261–281 (FLLI…VFSP), 283–303 (PSAG…YVAL), and 312–332 (TIGT…FAVS). The active-site Nucleophile is S288. The Charge relay system role is filled by H339. 2 consecutive transmembrane segments (helical) span residues 340–360 (IGGL…KAGA) and 365–385 (LLSA…GLHS). TPR repeat units follow at residues 424–457 (ADLL…EPKD) and 458–491 (HASY…KPKE).

Belongs to the peptidase S54 family.

The protein resides in the cell membrane. It carries out the reaction Cleaves type-1 transmembrane domains using a catalytic dyad composed of serine and histidine that are contributed by different transmembrane domains.. Its activity is regulated as follows. Inhibited by dichloroisocoumarin (DCI) and N-p-tosyl-L-phenylalanine chloromethyl ketone (TPCK), but not by other serine protease inhibitors such as sulfonyl fluoride PMSF and 4-(2-aminoethyl)benzenesulfonyl fluoride (AEBSF). Its function is as follows. Rhomboid-type serine protease that catalyzes intramembrane proteolysis. Important for normal cell division and sporulation. May act as a glucose exporter. The protein is Rhomboid protease GluP (gluP) of Bacillus subtilis (strain 168).